The primary structure comprises 201 residues: uncharacterized protein (201 aa).

Positions 15 to 122 (KNQIQFSTFN…EVLPQIRKTG (108 aa)) constitute a Bro-N domain.

This is an uncharacterized protein from Haemophilus influenzae (strain ATCC 51907 / DSM 11121 / KW20 / Rd).